The chain runs to 820 residues: Nuclear pore complex protein Nup93 (820 aa).

The protein belongs to the nucleoporin interacting component (NIC) family.

The protein localises to the nucleus membrane. Its subcellular location is the nucleus. It is found in the nuclear pore complex. Functionally, plays a role in the nuclear pore complex (NPC) assembly and/or maintenance. The protein is Nuclear pore complex protein Nup93 (dye) of Danio rerio (Zebrafish).